We begin with the raw amino-acid sequence, 247 residues long: Small ribosomal subunit protein eS6 (247 aa).

Residues 194 to 247 form a disordered region; sequence ALKKKRVTKKREDHAEYTKLLAQRMKEAKERKMERKRSNSRSKGDSIRESTSKK. Residues 217–247 are compositionally biased toward basic and acidic residues; that stretch reads RMKEAKERKMERKRSNSRSKGDSIRESTSKK.

This sequence belongs to the eukaryotic ribosomal protein eS6 family. Ribosomal protein S6 is the major substrate of protein kinases in eukaryote ribosomes.

Its function is as follows. Component of the 40S small ribosomal subunit. Plays an important role in controlling cell growth and proliferation through the selective translation of particular classes of mRNA. The polypeptide is Small ribosomal subunit protein eS6 (RPS6) (Aplysia californica (California sea hare)).